A 269-amino-acid polypeptide reads, in one-letter code: Indole-3-glycerol phosphate synthase (269 aa).

This sequence belongs to the TrpC family.

It catalyses the reaction 1-(2-carboxyphenylamino)-1-deoxy-D-ribulose 5-phosphate + H(+) = (1S,2R)-1-C-(indol-3-yl)glycerol 3-phosphate + CO2 + H2O. It functions in the pathway amino-acid biosynthesis; L-tryptophan biosynthesis; L-tryptophan from chorismate: step 4/5. This Roseiflexus castenholzii (strain DSM 13941 / HLO8) protein is Indole-3-glycerol phosphate synthase.